We begin with the raw amino-acid sequence, 347 residues long: Phosphate acyltransferase (347 aa).

Belongs to the PlsX family. In terms of assembly, homodimer. Probably interacts with PlsY.

It is found in the cytoplasm. It catalyses the reaction a fatty acyl-[ACP] + phosphate = an acyl phosphate + holo-[ACP]. The protein operates within lipid metabolism; phospholipid metabolism. Functionally, catalyzes the reversible formation of acyl-phosphate (acyl-PO(4)) from acyl-[acyl-carrier-protein] (acyl-ACP). This enzyme utilizes acyl-ACP as fatty acyl donor, but not acyl-CoA. The sequence is that of Phosphate acyltransferase from Pediococcus pentosaceus (strain ATCC 25745 / CCUG 21536 / LMG 10740 / 183-1w).